The chain runs to 388 residues: Chaperone protein DnaJ (388 aa).

The 65-residue stretch at 5-69 (DYYDVLGVDK…QKRAQYDQFG (65 aa)) folds into the J domain. The segment at 145 to 227 (GKKTDITYTR…CHGQGTVDKK (83 aa)) adopts a CR-type zinc-finger fold. Zn(2+)-binding residues include Cys-158, Cys-161, Cys-175, Cys-178, Cys-201, Cys-204, Cys-215, and Cys-218. CXXCXGXG motif repeat units follow at residues 158 to 165 (CPTCDGSG), 175 to 182 (CDKCHGSG), 201 to 208 (CDKCGGRG), and 215 to 222 (CQTCHGQG).

It belongs to the DnaJ family. Homodimer. Zn(2+) is required as a cofactor.

The protein localises to the cytoplasm. In terms of biological role, participates actively in the response to hyperosmotic and heat shock by preventing the aggregation of stress-denatured proteins and by disaggregating proteins, also in an autonomous, DnaK-independent fashion. Unfolded proteins bind initially to DnaJ; upon interaction with the DnaJ-bound protein, DnaK hydrolyzes its bound ATP, resulting in the formation of a stable complex. GrpE releases ADP from DnaK; ATP binding to DnaK triggers the release of the substrate protein, thus completing the reaction cycle. Several rounds of ATP-dependent interactions between DnaJ, DnaK and GrpE are required for fully efficient folding. Also involved, together with DnaK and GrpE, in the DNA replication of plasmids through activation of initiation proteins. The polypeptide is Chaperone protein DnaJ (Lactobacillus johnsonii (strain CNCM I-12250 / La1 / NCC 533)).